The primary structure comprises 101 residues: Small ribosomal subunit protein bS18c (101 aa).

It belongs to the bacterial ribosomal protein bS18 family. As to quaternary structure, part of the 30S ribosomal subunit.

The protein resides in the plastid. It is found in the chloroplast. This is Small ribosomal subunit protein bS18c from Guizotia abyssinica (Niger).